The sequence spans 270 residues: Tryptophan synthase alpha chain (270 aa).

Active-site proton acceptor residues include Glu-49 and Asp-60.

The protein belongs to the TrpA family. Tetramer of two alpha and two beta chains.

The enzyme catalyses (1S,2R)-1-C-(indol-3-yl)glycerol 3-phosphate + L-serine = D-glyceraldehyde 3-phosphate + L-tryptophan + H2O. The protein operates within amino-acid biosynthesis; L-tryptophan biosynthesis; L-tryptophan from chorismate: step 5/5. In terms of biological role, the alpha subunit is responsible for the aldol cleavage of indoleglycerol phosphate to indole and glyceraldehyde 3-phosphate. In Gluconobacter oxydans (strain 621H) (Gluconobacter suboxydans), this protein is Tryptophan synthase alpha chain.